The sequence spans 215 residues: Cytochrome b6 (215 aa).

A helical transmembrane segment spans residues 32-52 (IFYCLGGITLTCFLVQVATGF). Cysteine 35 is a binding site for heme c. The heme b site is built by histidine 86 and histidine 100. Helical transmembrane passes span 90–110 (ASMM…TGGF), 116–136 (LTWV…VTGY), and 186–206 (LHTF…FLMI). 2 residues coordinate heme b: histidine 187 and histidine 202.

The protein belongs to the cytochrome b family. PetB subfamily. The 4 large subunits of the cytochrome b6-f complex are cytochrome b6, subunit IV (17 kDa polypeptide, PetD), cytochrome f and the Rieske protein, while the 4 small subunits are PetG, PetL, PetM and PetN. The complex functions as a dimer. Requires heme b as cofactor. Heme c serves as cofactor.

The protein resides in the plastid. It is found in the chloroplast thylakoid membrane. Component of the cytochrome b6-f complex, which mediates electron transfer between photosystem II (PSII) and photosystem I (PSI), cyclic electron flow around PSI, and state transitions. This chain is Cytochrome b6, found in Physcomitrium patens (Spreading-leaved earth moss).